A 131-amino-acid polypeptide reads, in one-letter code: Small ribosomal subunit protein uS19 (131 aa).

Belongs to the universal ribosomal protein uS19 family.

Protein S19 forms a complex with S13 that binds strongly to the 16S ribosomal RNA. The protein is Small ribosomal subunit protein uS19 of Cenarchaeum symbiosum (strain A).